We begin with the raw amino-acid sequence, 279 residues long: Movement protein (279 aa).

The protein belongs to the cucumovirus movement protein family.

It is found in the host cell junction. It localises to the host plasmodesma. Transports viral genome to neighboring plant cells directly through plasmosdesmata, without any budding. The movement protein allows efficient cell to cell propagation, by bypassing the host cell wall barrier. Acts by forming a tubular structure at the host plasmodesmata, enlarging it enough to allow free passage of virion capsids. This is Movement protein from Cucumber mosaic virus (strain Kin) (CMV).